The sequence spans 600 residues: Intraflagellar transport protein 74 homolog (600 aa).

The disordered stretch occupies residues 1 to 64 (MASNHKSSAP…LGTGGVLSSQ (64 aa)). The tract at residues 1–90 (MASNHKSSAP…KTGMKGPQRQ (90 aa)) is basic region. Positions 22–33 (GRPPSGIRPPSG) are enriched in low complexity. Over residues 50–59 (SRGGPLGTGG) the composition is skewed to gly residues. The residue at position 51 (R51) is an Omega-N-methylarginine. T73 bears the Phosphothreonine mark. Positions 97–390 (YLGLLRSKIS…QELERKAQIE (294 aa)) form a coiled coil.

Belongs to the IFT74 family. As to quaternary structure, component of the IFT complex B, at least composed of IFT20, IFT22, IFT25, IFT27, IFT46, IFT52, TRAF3IP1/IFT54, IFT57, IFT74, IFT80, IFT81, and IFT88. Interacts with IFT81; the interaction is direct: within the IFT complex B, IFT74 and IFT81 mediate the transport of tubulin within the cilium. Interacts (via basic region) with beta-tubulin (via acidic region); interaction is direct. Interacts with ARL13B and IFT88. Interacts (via the IFT74/IFT81 heterodimer) with RABL2B. Interacts with IFT57 and IFT70B. In terms of tissue distribution, predominantly expressed in testis, but also detected in other organs containing cilia-bearing cells, including lung, brain and kidney (at protein level).

The protein localises to the cell projection. Its subcellular location is the cilium. It localises to the cytoplasmic vesicle. The protein resides in the flagellum. It is found in the secretory vesicle. The protein localises to the acrosome. Component of the intraflagellar transport (IFT) complex B: together with IFT81, forms a tubulin-binding module that specifically mediates transport of tubulin within the cilium. Binds beta-tubulin via its basic region. Required for ciliogenesis. Essential for flagellogenesis during spermatogenesis. The sequence is that of Intraflagellar transport protein 74 homolog (Ift74) from Mus musculus (Mouse).